The primary structure comprises 69 residues: Cold shock-like protein CspE (69 aa).

A CSD domain is found at 6 to 66 (GNVKWFNESK…GAKGPSAANV (61 aa)).

It localises to the cytoplasm. The polypeptide is Cold shock-like protein CspE (cspE) (Buchnera aphidicola subsp. Acyrthosiphon pisum (strain APS) (Acyrthosiphon pisum symbiotic bacterium)).